The primary structure comprises 231 residues: MQTVRSYFFGPTPQEQNRKWQSIIRKEQRQLDRQVYHLKAGRKKAEVQLKQLAKQSDITNMRILAKEIARANRHGKRLAESKALLGSLSLQLNDQMAMLKIQGTMQSSTKIMQDVSSLIRLPQLSETMRNLSMELTKAGVLEEMRDEMFLPVEDDEELMDLADEDEEVQEILTKYNVIPAPSEKAADAATHREQSLKQALPSLSNGIAKDSTEIDEEQLLDIRDKLDALKS.

Positions 184–195 (KAADAATHREQS) are enriched in basic and acidic residues. The tract at residues 184-214 (KAADAATHREQSLKQALPSLSNGIAKDSTEI) is disordered.

Belongs to the SNF7 family. Component of the endosomal sorting required for transport complex III (ESCRT-III).

Its subcellular location is the endosome membrane. The protein localises to the endomembrane system. Functionally, class E VPS protein implicated in concentration and sorting of cargo proteins of the multivesicular body (MVB) for incorporation into intralumenal vesicles. The lumenal sequestrated membrane proteins will be targeted into the vacuole after fusion of the endosome with the vacuole. The sequence is that of Vacuolar protein sorting-associated protein 24 (vps24) from Schizosaccharomyces pombe (strain 972 / ATCC 24843) (Fission yeast).